A 196-amino-acid polypeptide reads, in one-letter code: Transcriptional regulatory protein UhpA (196 aa).

Positions 3 to 116 constitute a Response regulatory domain; that stretch reads TVALIDDHLI…ELIAAVHTVA (114 aa). The residue at position 54 (Asp54) is a 4-aspartylphosphate. Residues 131–196 form the HTH luxR-type domain; it reads AAGRQDPLTK…ELAHRMFDGW (66 aa). A DNA-binding region (H-T-H motif) is located at residues 155-174; sequence VKEIAAELGLSPKTVHVHRA.

Post-translationally, phosphorylated and dephosphorylated by UhpB.

It localises to the cytoplasm. Functionally, part of the UhpABC signaling cascade that controls the expression of the hexose phosphate transporter UhpT. Activates the transcription of the uhpT gene. Acts by binding specifically to the uhpT promoter region. The chain is Transcriptional regulatory protein UhpA (uhpA) from Salmonella typhimurium (strain LT2 / SGSC1412 / ATCC 700720).